The chain runs to 354 residues: 5,10-methenyltetrahydromethanopterin hydrogenase (354 aa).

This sequence belongs to the HMD family.

The catalysed reaction is 5,10-methenyl-5,6,7,8-tetrahydromethanopterin + H2 = 5,10-methylenetetrahydromethanopterin + H(+). Its pathway is one-carbon metabolism; methanogenesis from CO(2); 5,10-methylene-5,6,7,8-tetrahydromethanopterin from 5,10-methenyl-5,6,7,8-tetrahydromethanopterin (hydrogen route): step 1/1. Functionally, catalyzes the reversible reduction of methenyl-H(4)MPT(+) to methylene-H(4)MPT. The sequence is that of 5,10-methenyltetrahydromethanopterin hydrogenase from Methanococcus maripaludis (strain C7 / ATCC BAA-1331).